Here is a 126-residue protein sequence, read N- to C-terminus: MSAAEKKPASKAPAGKAPRDTMKSADKKRGKNRKETYSSYIYKVLKQVHPDTGISNQAMRILNSFVNDIFERIATEASKLAAYNKKSTISSREIQTAVRLILPGELAKHAVTEGTKSVTKYSSSAQ.

The segment at 1 to 34 (MSAAEKKPASKAPAGKAPRDTMKSADKKRGKNRK) is disordered. Lysine 6 and lysine 7 each carry N6-acetyllysine; alternate. Residues lysine 6 and lysine 7 each participate in a glycyl lysine isopeptide (Lys-Gly) (interchain with G-Cter in SUMO); alternate cross-link. Serine 10 carries the phosphoserine modification. Lysine 11 is subject to N6-acetyllysine. Positions 17 to 27 (APRDTMKSADK) are enriched in basic and acidic residues. Lysine 120 participates in a covalent cross-link: Glycyl lysine isopeptide (Lys-Gly) (interchain with G-Cter in ubiquitin).

It belongs to the histone H2B family. In terms of assembly, the nucleosome is a histone octamer containing two molecules each of H2A, H2B, H3 and H4 assembled in one H3-H4 heterotetramer and two H2A-H2B heterodimers. The octamer wraps approximately 147 bp of DNA. Interacts with rik1. Post-translationally, monoubiquitinated by the rhp6/ubc2-bre1 complex to form H2BK123ub1. H2BK123ub1 gives a specific tag for epigenetic transcriptional activation and is also prerequisite for H3K4me and H3K79me formation. H2BK123ub1 also modulates the formation of double-strand breaks during meiosis and is a prerequisite for DNA-damage checkpoint activation. Phosphorylated by shk1 to form H2BS10ph during progression through meiotic prophase. May be correlated with chromosome condensation. In terms of processing, acetylation of N-terminal lysines and particularly formation of H2BK11ac has a positive effect on transcription. Post-translationally, sumoylation to form H2BK6su or H2BK7su occurs preferentially near the telomeres and represses gene transcription.

It is found in the nucleus. The protein localises to the chromosome. Its function is as follows. Core component of nucleosome. Nucleosomes wrap and compact DNA into chromatin, limiting DNA accessibility to the cellular machineries which require DNA as a template. Histones thereby play a central role in transcription regulation, DNA repair, DNA replication and chromosomal stability. DNA accessibility is regulated via a complex set of post-translational modifications of histones, also called histone code, and nucleosome remodeling. The polypeptide is Histone H2B-alpha (htb1) (Schizosaccharomyces pombe (strain 972 / ATCC 24843) (Fission yeast)).